The primary structure comprises 513 residues: Histidine ammonia-lyase (513 aa).

The segment at residues 144-146 is a cross-link (5-imidazolinone (Ala-Gly)); the sequence is ASG. Ser-145 carries the post-translational modification 2,3-didehydroalanine (Ser).

The protein belongs to the PAL/histidase family. Post-translationally, contains an active site 4-methylidene-imidazol-5-one (MIO), which is formed autocatalytically by cyclization and dehydration of residues Ala-Ser-Gly.

It is found in the cytoplasm. It catalyses the reaction L-histidine = trans-urocanate + NH4(+). The protein operates within amino-acid degradation; L-histidine degradation into L-glutamate; N-formimidoyl-L-glutamate from L-histidine: step 1/3. This is Histidine ammonia-lyase from Streptococcus sanguinis (strain SK36).